The following is a 153-amino-acid chain: Large ribosomal subunit protein uL15 (153 aa).

It belongs to the universal ribosomal protein uL15 family. In terms of assembly, part of the 50S ribosomal subunit.

Binds to the 23S rRNA. This Pelagibacter ubique (strain HTCC1062) protein is Large ribosomal subunit protein uL15.